Here is a 305-residue protein sequence, read N- to C-terminus: Sulfate adenylyltransferase subunit 2 (305 aa).

This sequence belongs to the PAPS reductase family. CysD subfamily. As to quaternary structure, heterodimer composed of CysD, the smaller subunit, and CysN.

The catalysed reaction is sulfate + ATP + H(+) = adenosine 5'-phosphosulfate + diphosphate. It functions in the pathway sulfur metabolism; hydrogen sulfide biosynthesis; sulfite from sulfate: step 1/3. Functionally, with CysN forms the ATP sulfurylase (ATPS) that catalyzes the adenylation of sulfate producing adenosine 5'-phosphosulfate (APS) and diphosphate, the first enzymatic step in sulfur assimilation pathway. APS synthesis involves the formation of a high-energy phosphoric-sulfuric acid anhydride bond driven by GTP hydrolysis by CysN coupled to ATP hydrolysis by CysD. This chain is Sulfate adenylyltransferase subunit 2, found in Azotobacter vinelandii (strain DJ / ATCC BAA-1303).